Here is a 298-residue protein sequence, read N- to C-terminus: Lipoyl synthase (298 aa).

Cys-40, Cys-45, Cys-51, Cys-67, Cys-71, Cys-74, and Ser-280 together coordinate [4Fe-4S] cluster. Residues 53–269 (AVRKTATFMI…KEIALSKGFS (217 aa)) form the Radical SAM core domain.

Belongs to the radical SAM superfamily. Lipoyl synthase family. Requires [4Fe-4S] cluster as cofactor.

It is found in the cytoplasm. It catalyses the reaction [[Fe-S] cluster scaffold protein carrying a second [4Fe-4S](2+) cluster] + N(6)-octanoyl-L-lysyl-[protein] + 2 oxidized [2Fe-2S]-[ferredoxin] + 2 S-adenosyl-L-methionine + 4 H(+) = [[Fe-S] cluster scaffold protein] + N(6)-[(R)-dihydrolipoyl]-L-lysyl-[protein] + 4 Fe(3+) + 2 hydrogen sulfide + 2 5'-deoxyadenosine + 2 L-methionine + 2 reduced [2Fe-2S]-[ferredoxin]. It functions in the pathway protein modification; protein lipoylation via endogenous pathway; protein N(6)-(lipoyl)lysine from octanoyl-[acyl-carrier-protein]. Its function is as follows. Catalyzes the radical-mediated insertion of two sulfur atoms into the C-6 and C-8 positions of the octanoyl moiety bound to the lipoyl domains of lipoate-dependent enzymes, thereby converting the octanoylated domains into lipoylated derivatives. This Bacillus cereus (strain B4264) protein is Lipoyl synthase.